The chain runs to 395 residues: Dihydrolipoyllysine-residue succinyltransferase component of 2-oxoglutarate dehydrogenase complex (395 aa).

A Lipoyl-binding domain is found at 2-77 (RVKIIVPSLG…AVGEEIGEIN (76 aa)). Lys43 is modified (N6-lipoyllysine). The Peripheral subunit-binding (PSBD) domain maps to 111 to 148 (TLAPSVQKLVTENKLDPNNIKGTGRDGRITKGDVLATI). Active-site residues include His366 and Asp370.

It belongs to the 2-oxoacid dehydrogenase family. In terms of assembly, forms a 24-polypeptide structural core with octahedral symmetry. Part of the 2-oxoglutarate dehydrogenase (OGDH) complex composed of E1 (2-oxoglutarate dehydrogenase), E2 (dihydrolipoamide succinyltransferase) and E3 (dihydrolipoamide dehydrogenase); the complex contains multiple copies of the three enzymatic components (E1, E2 and E3). (R)-lipoate is required as a cofactor.

It catalyses the reaction N(6)-[(R)-dihydrolipoyl]-L-lysyl-[protein] + succinyl-CoA = N(6)-[(R)-S(8)-succinyldihydrolipoyl]-L-lysyl-[protein] + CoA. It participates in amino-acid degradation; L-lysine degradation via saccharopine pathway; glutaryl-CoA from L-lysine: step 6/6. Functionally, E2 component of the 2-oxoglutarate dehydrogenase (OGDH) complex which catalyzes the second step in the conversion of 2-oxoglutarate to succinyl-CoA and CO(2). The sequence is that of Dihydrolipoyllysine-residue succinyltransferase component of 2-oxoglutarate dehydrogenase complex (sucB) from Rickettsia conorii (strain ATCC VR-613 / Malish 7).